The primary structure comprises 112 residues: Small ribosomal subunit protein bS6 (112 aa).

Belongs to the bacterial ribosomal protein bS6 family.

In terms of biological role, binds together with bS18 to 16S ribosomal RNA. This Christiangramia forsetii (strain DSM 17595 / CGMCC 1.15422 / KT0803) (Gramella forsetii) protein is Small ribosomal subunit protein bS6.